The primary structure comprises 717 residues: DNA ligase (717 aa).

Residues aspartate 44–aspartate 48, serine 93–leucine 94, and glutamate 127 contribute to the NAD(+) site. Catalysis depends on lysine 129, which acts as the N6-AMP-lysine intermediate. NAD(+) is bound by residues arginine 150, glutamate 186, lysine 302, and lysine 326. Residues cysteine 431, cysteine 434, cysteine 455, and cysteine 461 each coordinate Zn(2+). The 79-residue stretch at threonine 639–glycine 717 folds into the BRCT domain.

It belongs to the NAD-dependent DNA ligase family. LigA subfamily. Mg(2+) serves as cofactor. It depends on Mn(2+) as a cofactor.

It catalyses the reaction NAD(+) + (deoxyribonucleotide)n-3'-hydroxyl + 5'-phospho-(deoxyribonucleotide)m = (deoxyribonucleotide)n+m + AMP + beta-nicotinamide D-nucleotide.. Its function is as follows. DNA ligase that catalyzes the formation of phosphodiester linkages between 5'-phosphoryl and 3'-hydroxyl groups in double-stranded DNA using NAD as a coenzyme and as the energy source for the reaction. It is essential for DNA replication and repair of damaged DNA. The chain is DNA ligase from Rhizobium rhizogenes (strain K84 / ATCC BAA-868) (Agrobacterium radiobacter).